The sequence spans 327 residues: L-lactate dehydrogenase (327 aa).

NAD(+)-binding positions include Val18, Asp39, Lys44, Tyr69, and 83–84 (GA). Substrate-binding positions include Gln86, Arg92, and 124 to 127 (NPVD). NAD(+) is bound by residues 122–124 (AAN) and Ser147. Substrate is bound at residue 152–155 (DSAR). Beta-D-fructose 1,6-bisphosphate is bound by residues Arg157 and His172. His179 (proton acceptor) is an active-site residue. Residue Tyr224 is modified to Phosphotyrosine. Residue Thr233 coordinates substrate.

It belongs to the LDH/MDH superfamily. LDH family. As to quaternary structure, homotetramer.

The protein localises to the cytoplasm. It carries out the reaction (S)-lactate + NAD(+) = pyruvate + NADH + H(+). It participates in fermentation; pyruvate fermentation to lactate; (S)-lactate from pyruvate: step 1/1. Allosterically activated by fructose 1,6-bisphosphate (FBP). Its function is as follows. Catalyzes the conversion of lactate to pyruvate. This Streptococcus equi subsp. zooepidemicus (strain H70) protein is L-lactate dehydrogenase.